We begin with the raw amino-acid sequence, 318 residues long: Tyrosine recombinase XerD (318 aa).

The Core-binding (CB) domain maps to 5–90 (PSDAKLTGLF…AMRHLYRFLL (86 aa)). A Tyr recombinase domain is found at 111–310 (GLPKVLSIAD…VEERLKSLVR (200 aa)). Catalysis depends on residues Arg-161, Lys-185, His-262, Arg-265, and His-288. Catalysis depends on Tyr-297, which acts as the O-(3'-phospho-DNA)-tyrosine intermediate.

The protein belongs to the 'phage' integrase family. XerD subfamily. In terms of assembly, forms a cyclic heterotetrameric complex composed of two molecules of XerC and two molecules of XerD.

It is found in the cytoplasm. Functionally, site-specific tyrosine recombinase, which acts by catalyzing the cutting and rejoining of the recombining DNA molecules. The XerC-XerD complex is essential to convert dimers of the bacterial chromosome into monomers to permit their segregation at cell division. It also contributes to the segregational stability of plasmids. This is Tyrosine recombinase XerD from Bradyrhizobium diazoefficiens (strain JCM 10833 / BCRC 13528 / IAM 13628 / NBRC 14792 / USDA 110).